A 183-amino-acid chain; its full sequence is Translation initiation factor IF-3 (183 aa).

Belongs to the IF-3 family. As to quaternary structure, monomer.

The protein localises to the cytoplasm. Functionally, IF-3 binds to the 30S ribosomal subunit and shifts the equilibrium between 70S ribosomes and their 50S and 30S subunits in favor of the free subunits, thus enhancing the availability of 30S subunits on which protein synthesis initiation begins. The polypeptide is Translation initiation factor IF-3 (Pseudomonas syringae pv. tomato (strain ATCC BAA-871 / DC3000)).